Reading from the N-terminus, the 100-residue chain is Glyceraldehyde-3-phosphate dehydrogenase, testis-specific (100 aa).

NAD(+)-binding residues include Asp39 and Thr64. Arg89 is a D-glyceraldehyde 3-phosphate binding site.

It belongs to the glyceraldehyde-3-phosphate dehydrogenase family. Homotetramer.

The protein localises to the cytoplasm. The enzyme catalyses D-glyceraldehyde 3-phosphate + phosphate + NAD(+) = (2R)-3-phospho-glyceroyl phosphate + NADH + H(+). It participates in carbohydrate degradation; glycolysis; pyruvate from D-glyceraldehyde 3-phosphate: step 1/5. Its function is as follows. May play an important role in regulating the switch between different pathways for energy production during spermiogenesis and in the spermatozoon. Required for sperm motility and male fertility. In Mesocricetus auratus (Golden hamster), this protein is Glyceraldehyde-3-phosphate dehydrogenase, testis-specific.